The following is a 302-amino-acid chain: 1D-myo-inositol 2-acetamido-2-deoxy-alpha-D-glucopyranoside deacetylase (302 aa).

Residues His13, Asp16, and His155 each contribute to the Zn(2+) site.

The protein belongs to the MshB deacetylase family. Zn(2+) serves as cofactor.

It catalyses the reaction 1D-myo-inositol 2-acetamido-2-deoxy-alpha-D-glucopyranoside + H2O = 1D-myo-inositol 2-amino-2-deoxy-alpha-D-glucopyranoside + acetate. Its function is as follows. Catalyzes the deacetylation of 1D-myo-inositol 2-acetamido-2-deoxy-alpha-D-glucopyranoside (GlcNAc-Ins) in the mycothiol biosynthesis pathway. The polypeptide is 1D-myo-inositol 2-acetamido-2-deoxy-alpha-D-glucopyranoside deacetylase (Nocardioides sp. (strain ATCC BAA-499 / JS614)).